Reading from the N-terminus, the 133-residue chain is Small ribosomal subunit protein uS11 (133 aa).

This sequence belongs to the universal ribosomal protein uS11 family. Part of the 30S ribosomal subunit. Interacts with proteins S7 and S18. Binds to IF-3.

Functionally, located on the platform of the 30S subunit, it bridges several disparate RNA helices of the 16S rRNA. Forms part of the Shine-Dalgarno cleft in the 70S ribosome. In Chlamydia pneumoniae (Chlamydophila pneumoniae), this protein is Small ribosomal subunit protein uS11.